Here is a 382-residue protein sequence, read N- to C-terminus: tRNA (guanine(37)-N(1))-methyltransferase (382 aa).

S-adenosyl-L-methionine is bound by residues H205, 243 to 244 (DL), 269 to 270 (DA), and N291.

This sequence belongs to the class I-like SAM-binding methyltransferase superfamily. TRM5/TYW2 family. As to quaternary structure, monomer.

The protein localises to the mitochondrion matrix. The protein resides in the nucleus. It is found in the cytoplasm. It carries out the reaction guanosine(37) in tRNA + S-adenosyl-L-methionine = N(1)-methylguanosine(37) in tRNA + S-adenosyl-L-homocysteine + H(+). Specifically methylates the N1 position of guanosine-37 in various cytoplasmic and mitochondrial tRNAs. Methylation is not dependent on the nature of the nucleoside 5' of the target nucleoside. This is the first step in the biosynthesis of wybutosine (yW), a modified base adjacent to the anticodon of tRNAs and required for accurate decoding. The polypeptide is tRNA (guanine(37)-N(1))-methyltransferase (Entamoeba histolytica (strain ATCC 30459 / HM-1:IMSS / ABRM)).